We begin with the raw amino-acid sequence, 825 residues long: Cytosolic phospholipase A2 delta (825 aa).

Residues 14–133 (SPERLHGHPY…LPGQLLQKTF (120 aa)) form the C2 domain. The Ca(2+) site is built by Asp47, Asp53, Asp103, Asp105, and Asp111. The PLA2c domain maps to 281 to 825 (DCCPKELSVR…SETRPLGVKT (545 aa)). A substrate-binding site is contributed by 339–340 (GG). Ser370 serves as the catalytic Nucleophile. The active-site Proton acceptor is Asp654.

The cofactor is Ca(2+). As to expression, weakly or not expressed in most tissues. Detected in placenta of 17.5 dpc embryos.

The protein localises to the cytoplasm. The protein resides in the cytosol. It localises to the membrane. The catalysed reaction is a 1,2-diacyl-sn-glycero-3-phosphocholine + H2O = a 1-acyl-sn-glycero-3-phosphocholine + a fatty acid + H(+). It catalyses the reaction 1-hexadecanoyl-2-(5Z,8Z,11Z,14Z-eicosatetraenoyl)-sn-glycero-3-phosphocholine + H2O = 1-hexadecanoyl-sn-glycero-3-phosphocholine + (5Z,8Z,11Z,14Z)-eicosatetraenoate + H(+). The enzyme catalyses 1-hexadecanoyl-2-(9Z,12Z-octadecadienoyl)-sn-glycero-3-phosphocholine + H2O = (9Z,12Z)-octadecadienoate + 1-hexadecanoyl-sn-glycero-3-phosphocholine + H(+). It carries out the reaction 1-hexadecanoyl-2-(9Z-octadecenoyl)-sn-glycero-3-phosphocholine + H2O = 1-hexadecanoyl-sn-glycero-3-phosphocholine + (9Z)-octadecenoate + H(+). The catalysed reaction is 1-hexadecanoyl-2-(5Z,8Z,11Z,14Z-eicosatetraenoyl)-sn-glycero-3-phosphoethanolamine + H2O = 1-hexadecanoyl-sn-glycero-3-phosphoethanolamine + (5Z,8Z,11Z,14Z)-eicosatetraenoate + H(+). It catalyses the reaction 1-hexadecanoyl-2-(9Z,12Z-octadecadienoyl)-sn-glycero-3-phosphoethanolamine + H2O = 1-hexadecanoyl-sn-glycero-3-phosphoethanolamine + (9Z,12Z)-octadecadienoate + H(+). The enzyme catalyses 1-hexadecanoyl-sn-glycero-3-phosphocholine + H2O = sn-glycerol 3-phosphocholine + hexadecanoate + H(+). Its pathway is lipid metabolism; fatty acid metabolism. Its activity is regulated as follows. Stimulated by cytosolic Ca(2+). In terms of biological role, calcium-dependent phospholipase A2 that selectively hydrolyzes glycerophospholipids in the sn-2 position. Compared to its human ortholog, may have no preference for the fatty acid found at the sn-2 position. The chain is Cytosolic phospholipase A2 delta from Mus musculus (Mouse).